We begin with the raw amino-acid sequence, 306 residues long: tRNA-cytidine(32) 2-sulfurtransferase (306 aa).

A PP-loop motif motif is present at residues 44–49 (SGGKDS). [4Fe-4S] cluster contacts are provided by Cys-119, Cys-122, and Cys-210.

This sequence belongs to the TtcA family. As to quaternary structure, homodimer. The cofactor is Mg(2+). Requires [4Fe-4S] cluster as cofactor.

Its subcellular location is the cytoplasm. It carries out the reaction cytidine(32) in tRNA + S-sulfanyl-L-cysteinyl-[cysteine desulfurase] + AH2 + ATP = 2-thiocytidine(32) in tRNA + L-cysteinyl-[cysteine desulfurase] + A + AMP + diphosphate + H(+). It participates in tRNA modification. In terms of biological role, catalyzes the ATP-dependent 2-thiolation of cytidine in position 32 of tRNA, to form 2-thiocytidine (s(2)C32). The sulfur atoms are provided by the cysteine/cysteine desulfurase (IscS) system. The sequence is that of tRNA-cytidine(32) 2-sulfurtransferase from Photorhabdus laumondii subsp. laumondii (strain DSM 15139 / CIP 105565 / TT01) (Photorhabdus luminescens subsp. laumondii).